A 362-amino-acid chain; its full sequence is Anthranilate phosphoribosyltransferase (362 aa).

Residues G96, 99-100, T104, 106-109, 124-132, and G136 contribute to the 5-phospho-alpha-D-ribose 1-diphosphate site; these read GD, NIST, and KHGNRAASS. An anthranilate-binding site is contributed by G96. A Mg(2+)-binding site is contributed by S108. N127 is an anthranilate binding site. R182 provides a ligand contact to anthranilate. 2 residues coordinate Mg(2+): D240 and E241.

The protein belongs to the anthranilate phosphoribosyltransferase family. Homodimer. Mg(2+) is required as a cofactor.

It catalyses the reaction N-(5-phospho-beta-D-ribosyl)anthranilate + diphosphate = 5-phospho-alpha-D-ribose 1-diphosphate + anthranilate. Its pathway is amino-acid biosynthesis; L-tryptophan biosynthesis; L-tryptophan from chorismate: step 2/5. Catalyzes the transfer of the phosphoribosyl group of 5-phosphorylribose-1-pyrophosphate (PRPP) to anthranilate to yield N-(5'-phosphoribosyl)-anthranilate (PRA). The polypeptide is Anthranilate phosphoribosyltransferase (Rhodococcus jostii (strain RHA1)).